The sequence spans 974 residues: Villin-4 (974 aa).

Gelsolin-like repeat units lie at residues 29–79, 150–190, 262–305, 394–451, 532–572, and 634–675; these read FIPT…DEAG, VHVK…QERA, GQAN…DDRK, LQVW…EERG, MQAI…TDQE, and LKVT…KNKL. The interval 738 to 783 is disordered; that stretch reads VKNGGTPVADKPKRRTPASYGGRASVPDKSQQRSRSMSFSPDRVRV. A phosphoserine mark is found at S777 and S787. Disordered stretches follow at residues 801–833 and 845–930; these read NARN…APKS and KIPP…PVSD. Over residues 824 to 833 the composition is skewed to low complexity; the sequence is SSKFAPAPKS. Residues 872 to 887 show a composition bias toward basic and acidic residues; it reads NSKEQEEKKENDKEEG. Positions 888-898 are enriched in polar residues; that stretch reads SMSSRIESLTI. S890 is subject to Phosphoserine. One can recognise an HP domain in the interval 909–974; sequence EEDLPAHPYD…NKFKMAVQLF (66 aa). Positions 912-921 are enriched in basic and acidic residues; the sequence is LPAHPYDRLK.

The protein belongs to the villin/gelsolin family. As to expression, preferentially expressed in vegetative tissues. Detected in the whole seedling, hypocotyl, cotyledon, primary root, roots hair cells and trichomes. Expressed in flowers but not in the silique.

It localises to the cytoplasm. It is found in the cytoskeleton. In terms of biological role, binds actin and actin filament bundles in a Ca(2+)-insensitive manner, but caps the barbed end of actin filaments and is able to sever them in a calcium-dependent manner. Involved in root hair growth through regulating actin organization in a Ca(2+)-dependent manner. This Arabidopsis thaliana (Mouse-ear cress) protein is Villin-4.